We begin with the raw amino-acid sequence, 363 residues long: Flagellar P-ring protein (363 aa).

The signal sequence occupies residues 1–20 (MKKFTLLLLCFVLPMTSAYA).

This sequence belongs to the FlgI family. In terms of assembly, the basal body constitutes a major portion of the flagellar organelle and consists of four rings (L,P,S, and M) mounted on a central rod.

The protein resides in the periplasm. The protein localises to the bacterial flagellum basal body. Its function is as follows. Assembles around the rod to form the L-ring and probably protects the motor/basal body from shearing forces during rotation. The polypeptide is Flagellar P-ring protein (Vibrio vulnificus (strain YJ016)).